A 402-amino-acid chain; its full sequence is mRNA cap guanine-N(7) methyltransferase (402 aa).

Residues 1-11 show a composition bias toward basic and acidic residues; sequence MDHVLNPEEKV. Residues 1–75 form a disordered region; sequence MDHVLNPEEK…PRLEEGHGSL (75 aa). The segment covering 35–50 has biased composition (polar residues); sequence PKLSASEKSLPGNTKS. Over residues 55-72 the composition is skewed to basic and acidic residues; it reads KAAEPDSPPKRPRLEEGH. The mRNA cap 0 methyltransferase domain maps to 94–401; it reads SRIFHLRNFN…IYLLFAFEKQ (308 aa). 103–104 is a binding site for mRNA; it reads NN. S-adenosyl-L-methionine contacts are provided by Lys107, Gly131, Asp153, Asp187, Gln210, and Tyr215.

This sequence belongs to the class I-like SAM-binding methyltransferase superfamily. mRNA cap 0 methyltransferase family.

It localises to the nucleus. It catalyses the reaction a 5'-end (5'-triphosphoguanosine)-ribonucleoside in mRNA + S-adenosyl-L-methionine = a 5'-end (N(7)-methyl 5'-triphosphoguanosine)-ribonucleoside in mRNA + S-adenosyl-L-homocysteine. Its function is as follows. Catalytic subunit of the mRNA-capping methyltransferase RNMT:RAMAC complex that methylates the N7 position of the added guanosine to the 5'-cap structure of mRNAs. Binds RNA containing 5'-terminal GpppC. In Xenopus laevis (African clawed frog), this protein is mRNA cap guanine-N(7) methyltransferase (rnmt).